A 68-amino-acid polypeptide reads, in one-letter code: UPF0434 protein H16_A0605 (68 aa).

It belongs to the UPF0434 family.

This Cupriavidus necator (strain ATCC 17699 / DSM 428 / KCTC 22496 / NCIMB 10442 / H16 / Stanier 337) (Ralstonia eutropha) protein is UPF0434 protein H16_A0605.